The following is a 303-amino-acid chain: tRNA-cytidine(32) 2-sulfurtransferase (303 aa).

The PP-loop motif signature appears at 45-50 (SGGKDS). Positions 120, 123, and 211 each coordinate [4Fe-4S] cluster.

The protein belongs to the TtcA family. In terms of assembly, homodimer. The cofactor is Mg(2+). [4Fe-4S] cluster serves as cofactor.

The protein resides in the cytoplasm. It carries out the reaction cytidine(32) in tRNA + S-sulfanyl-L-cysteinyl-[cysteine desulfurase] + AH2 + ATP = 2-thiocytidine(32) in tRNA + L-cysteinyl-[cysteine desulfurase] + A + AMP + diphosphate + H(+). It functions in the pathway tRNA modification. Its function is as follows. Catalyzes the ATP-dependent 2-thiolation of cytidine in position 32 of tRNA, to form 2-thiocytidine (s(2)C32). The sulfur atoms are provided by the cysteine/cysteine desulfurase (IscS) system. The protein is tRNA-cytidine(32) 2-sulfurtransferase of Methylobacillus flagellatus (strain ATCC 51484 / DSM 6875 / VKM B-1610 / KT).